A 1311-amino-acid chain; its full sequence is Mitogen-activated protein kinase kinase kinase 19 (1311 aa).

Disordered stretches follow at residues 85–119 (PDPL…SPPD), 250–274 (PLSQ…PVEH), 330–363 (SVKE…YLSS), 396–472 (MTPA…NPEM), 486–508 (EGTS…PAQN), 576–607 (HRPH…KQAF), and 734–767 (SKDK…FLSS). The span at 250-261 (PLSQSAEFSSSK) shows a compositional bias: polar residues. 3 stretches are compositionally biased toward basic and acidic residues: residues 262-274 (NHQE…PVEH), 330-345 (SVKE…RDSG), and 450-464 (LEGH…KIPM). The segment covering 734 to 748 (SKDKGCKDMGGHTED) has biased composition (basic and acidic residues). One can recognise a Protein kinase domain in the interval 1044 to 1307 (WTKGEILGRG…ALQLLKHSFL (264 aa)). Residues 1050-1058 (LGRGAYGTV) and K1072 contribute to the ATP site. D1169 serves as the catalytic Proton acceptor.

This sequence belongs to the protein kinase superfamily. STE Ser/Thr protein kinase family. STE20 subfamily.

It carries out the reaction L-seryl-[protein] + ATP = O-phospho-L-seryl-[protein] + ADP + H(+). The catalysed reaction is L-threonyl-[protein] + ATP = O-phospho-L-threonyl-[protein] + ADP + H(+). This Mus musculus (Mouse) protein is Mitogen-activated protein kinase kinase kinase 19 (Map3k19).